The sequence spans 144 residues: 3-hydroxyacyl-[acyl-carrier-protein] dehydratase FabZ (144 aa).

His48 is an active-site residue.

It belongs to the thioester dehydratase family. FabZ subfamily.

Its subcellular location is the cytoplasm. It carries out the reaction a (3R)-hydroxyacyl-[ACP] = a (2E)-enoyl-[ACP] + H2O. Involved in unsaturated fatty acids biosynthesis. Catalyzes the dehydration of short chain beta-hydroxyacyl-ACPs and long chain saturated and unsaturated beta-hydroxyacyl-ACPs. The polypeptide is 3-hydroxyacyl-[acyl-carrier-protein] dehydratase FabZ (Chloroflexus aggregans (strain MD-66 / DSM 9485)).